A 161-amino-acid polypeptide reads, in one-letter code: Probable metalloprotease HVO_1016 (161 aa).

The 122-residue stretch at 10–131 (VGIAADALDF…WEAFDQSGEV (122 aa)) folds into the MPN domain. Residue E31 is the Proton donor/acceptor of the active site. Zn(2+) contacts are provided by H87, H89, and D100. Positions 87 to 100 (HSHPNGVLRPSDAD) match the JAMM motif motif.

Belongs to the peptidase M67B family. In terms of assembly, monomer and homodimer. It depends on Zn(2+) as a cofactor.

In terms of biological role, probable metalloprotease. Does not hydrolyze SAMP1- and SAMP2-protein conjugates, diglycine-AMC, Ub-AMC, hemoglobin, cytochrome c, carbonic anhydrase, creatinine phosphokinase, beta-amylase and bovine serum albumin. This chain is Probable metalloprotease HVO_1016, found in Haloferax volcanii (strain ATCC 29605 / DSM 3757 / JCM 8879 / NBRC 14742 / NCIMB 2012 / VKM B-1768 / DS2) (Halobacterium volcanii).